The primary structure comprises 363 residues: NAD(P)H-quinone oxidoreductase subunit 1, chloroplastic (363 aa).

6 helical membrane-spanning segments follow: residues 30–50 (LVPI…IVWL), 98–118 (FSIG…VIPF), 129–149 (IGIF…LMSG), 248–268 (YSGI…LLSS), 300–320 (IIGT…FLFI), and 343–363 (FLLP…LLSL).

It belongs to the complex I subunit 1 family. NDH is composed of at least 16 different subunits, 5 of which are encoded in the nucleus.

It localises to the plastid. Its subcellular location is the chloroplast thylakoid membrane. The catalysed reaction is a plastoquinone + NADH + (n+1) H(+)(in) = a plastoquinol + NAD(+) + n H(+)(out). It catalyses the reaction a plastoquinone + NADPH + (n+1) H(+)(in) = a plastoquinol + NADP(+) + n H(+)(out). Its function is as follows. NDH shuttles electrons from NAD(P)H:plastoquinone, via FMN and iron-sulfur (Fe-S) centers, to quinones in the photosynthetic chain and possibly in a chloroplast respiratory chain. The immediate electron acceptor for the enzyme in this species is believed to be plastoquinone. Couples the redox reaction to proton translocation, and thus conserves the redox energy in a proton gradient. The polypeptide is NAD(P)H-quinone oxidoreductase subunit 1, chloroplastic (Gossypium barbadense (Sea Island cotton)).